Here is a 479-residue protein sequence, read N- to C-terminus: Ammonium transporter Rh type C (479 aa).

At 1–9 (MAWNTNLRW) the chain is on the cytoplasmic side. The chain crosses the membrane as a helical span at residues 10 to 30 (RLPLTCLLLQVIMVILFGVFV). Topologically, residues 31–60 (RYDFEADAHWWSERTHKNLSDMENEFYYRY) are extracellular. A glycan (N-linked (GlcNAc...) asparagine) is linked at Asn48. Residues 61–81 (PSFQDVHVMVFVGFGFLMTFL) traverse the membrane as a helical segment. Residues 82 to 85 (QRYG) lie on the Cytoplasmic side of the membrane. Residues 86–106 (FSAVGFNFLLAAFGIQWALLM) form a helical membrane-spanning segment. Over 107 to 123 (QGWFHFLQDRYIVVGVE) the chain is Extracellular. Residues 124–144 (NLINADFCVASVCVAFGAVLG) form a helical membrane-spanning segment. The Cytoplasmic segment spans residues 145–148 (KVSP). A helical membrane pass occupies residues 149-169 (IQLLIMTFFQVTLFAVNEFIL). At 170 to 177 (LNLLKVKD) the chain is on the extracellular side. The helical transmembrane segment at 178-200 (AGGSMTIHTFGAYFGLTVTRILY) threads the bilayer. At 201-218 (RRNLEQSKERQNSVYQSD) the chain is on the cytoplasmic side. The chain crosses the membrane as a helical span at residues 219-239 (LFAMIGTLFLWMYWPSFNSAI). Residues 240-250 (SYHGDSQHRAA) lie on the Extracellular side of the membrane. Residues 251–271 (INTYCSLAACVLTSVAISSAL) traverse the membrane as a helical segment. Residues 272 to 281 (HKKGKLDMVH) are Cytoplasmic-facing. A helical membrane pass occupies residues 282–302 (IQNATLAGGVAVGTAAEMMLM). A topological domain (extracellular) is located at residue Pro303. A helical transmembrane segment spans residues 304 to 324 (YGALIIGFVCGIISTLGFVYL). Residues 325-345 (TPFLESRLHIQDTCGINNLHG) lie on the Cytoplasmic side of the membrane. A helical transmembrane segment spans residues 346–366 (IPGIIGGIVGAVTAASASLEV). The Extracellular segment spans residues 367–394 (YGKEGLVHSFDFQGFNGDWTARTQGKFQ). A helical membrane pass occupies residues 395–415 (IYGLLVTLAMALMGGIIVGLI). Over 416–479 (LRLPFWGQPS…PMASSVPLVP (64 aa)) the chain is Cytoplasmic.

The protein belongs to the ammonium transporter (TC 2.A.49) family. Rh subfamily. Homotrimer. N-glycosylated. As to expression, expressed in brain, testis, placenta, pancreas, esophagus and prostate. Expressed in squamous epithelial tissues (at protein level). Expressed in kidney.

The protein localises to the cell membrane. The protein resides in the apical cell membrane. It carries out the reaction NH4(+)(in) = NH4(+)(out). The enzyme catalyses methylamine(out) = methylamine(in). It catalyses the reaction CO2(out) = CO2(in). Its function is as follows. Ammonium transporter involved in the maintenance of acid-base homeostasis. Transports ammonium and its related derivative methylammonium across the plasma membrane of epithelial cells likely contributing to renal transepithelial ammonia transport and ammonia metabolism. Postulated to primarily mediate an electroneutral bidirectional transport of NH3 ammonia species according to a mechanism that implies interaction of an NH4(+) ion with acidic residues of the pore entry followed by dissociation of NH4(+) into NH3 and H(+). As a result NH3 transits through the central pore and is protonated on the extracellular side reforming NH4(+). May act as a CO2 channel providing for renal acid secretion. The chain is Ammonium transporter Rh type C (RHCG) from Homo sapiens (Human).